Reading from the N-terminus, the 228-residue chain is L-ribulose-5-phosphate 4-epimerase UlaF (228 aa).

Residues 26 to 27, 43 to 44, and 72 to 73 contribute to the substrate site; these read GN, SG, and SS. Zn(2+)-binding residues include D74, H93, and H95. D118 (proton donor/acceptor) is an active-site residue. Residue H167 coordinates Zn(2+). The active-site Proton donor/acceptor is Y225.

Belongs to the aldolase class II family. AraD/FucA subfamily. Zn(2+) serves as cofactor.

The catalysed reaction is L-ribulose 5-phosphate = D-xylulose 5-phosphate. It functions in the pathway cofactor degradation; L-ascorbate degradation; D-xylulose 5-phosphate from L-ascorbate: step 4/4. In terms of biological role, catalyzes the isomerization of L-ribulose 5-phosphate to D-xylulose 5-phosphate. Is involved in the anaerobic L-ascorbate utilization. The sequence is that of L-ribulose-5-phosphate 4-epimerase UlaF from Salmonella paratyphi B (strain ATCC BAA-1250 / SPB7).